The sequence spans 58 residues: UPF0391 membrane protein Shew185_1413 (58 aa).

2 helical membrane-spanning segments follow: residues 6 to 26 (LVFL…IAGA) and 28 to 48 (AGIA…SLLI).

This sequence belongs to the UPF0391 family.

The protein resides in the cell membrane. The sequence is that of UPF0391 membrane protein Shew185_1413 from Shewanella baltica (strain OS185).